Reading from the N-terminus, the 215-residue chain is MYAVASIPFTDLGQVKKLIIKSAAAGADFVELRLDYWTRKETPPFLEMIELARNYGLDVIVTVRDPEEGGVWSPPWRGEAYEMASEAGAVCDVEVKKFKELPCDRAILSVHYFRKPPREGEVRKLSQRALEAGAWAFKVATVVTDFPSYFLLFSESVHPRTAFMPMGEGTEALRLASALLGSFLNYGSVGEATAPGQVSVRQLTKALSALGGRGD.

3-dehydroquinate is bound by residues serine 6, 31–33, and arginine 64; that span reads ELR. Residue histidine 111 is the Proton donor/acceptor of the active site. The active-site Schiff-base intermediate with substrate is lysine 138. 3-dehydroquinate-binding residues include arginine 174, threonine 193, and glutamine 197.

The protein belongs to the type-I 3-dehydroquinase family. Homodimer.

It catalyses the reaction 3-dehydroquinate = 3-dehydroshikimate + H2O. It functions in the pathway metabolic intermediate biosynthesis; chorismate biosynthesis; chorismate from D-erythrose 4-phosphate and phosphoenolpyruvate: step 3/7. Functionally, involved in the third step of the chorismate pathway, which leads to the biosynthesis of aromatic amino acids. Catalyzes the cis-dehydration of 3-dehydroquinate (DHQ) and introduces the first double bond of the aromatic ring to yield 3-dehydroshikimate. This Ignicoccus hospitalis (strain KIN4/I / DSM 18386 / JCM 14125) protein is 3-dehydroquinate dehydratase.